A 94-amino-acid polypeptide reads, in one-letter code: Small ribosomal subunit protein bS6 (94 aa).

This sequence belongs to the bacterial ribosomal protein bS6 family.

In terms of biological role, binds together with bS18 to 16S ribosomal RNA. The sequence is that of Small ribosomal subunit protein bS6 from Alkaliphilus oremlandii (strain OhILAs) (Clostridium oremlandii (strain OhILAs)).